The primary structure comprises 56 residues: Large ribosomal subunit protein bL33C (56 aa).

This sequence belongs to the bacterial ribosomal protein bL33 family.

The protein is Large ribosomal subunit protein bL33C of Sorangium cellulosum (strain So ce56) (Polyangium cellulosum (strain So ce56)).